The sequence spans 146 residues: Putative pre-16S rRNA nuclease (146 aa).

The protein belongs to the YqgF nuclease family.

Its subcellular location is the cytoplasm. Its function is as follows. Could be a nuclease involved in processing of the 5'-end of pre-16S rRNA. This is Putative pre-16S rRNA nuclease from Burkholderia mallei (strain SAVP1).